Here is a 371-residue protein sequence, read N- to C-terminus: Prephenate dehydrogenase (371 aa).

Positions 6-295 (DTILLAGLGL…GLPLRQKGAI (290 aa)) constitute a Prephenate/arogenate dehydrogenase domain. 7–37 (TILLAGLGLIGGSIALAIKKNHPGKRIIGID) is a binding site for NAD(+). The ACT domain maps to 300–371 (DLYVDVPDHP…RAEYETFYAD (72 aa)).

This sequence belongs to the prephenate/arogenate dehydrogenase family.

The enzyme catalyses prephenate + NAD(+) = 3-(4-hydroxyphenyl)pyruvate + CO2 + NADH. It participates in amino-acid biosynthesis; L-tyrosine biosynthesis; (4-hydroxyphenyl)pyruvate from prephenate (NAD(+) route): step 1/1. This chain is Prephenate dehydrogenase (tyrA), found in Bacillus subtilis (strain 168).